Reading from the N-terminus, the 405-residue chain is ATP phosphoribosyltransferase regulatory subunit (405 aa).

The protein belongs to the class-II aminoacyl-tRNA synthetase family. HisZ subfamily. In terms of assembly, heteromultimer composed of HisG and HisZ subunits.

It localises to the cytoplasm. It functions in the pathway amino-acid biosynthesis; L-histidine biosynthesis; L-histidine from 5-phospho-alpha-D-ribose 1-diphosphate: step 1/9. In terms of biological role, required for the first step of histidine biosynthesis. May allow the feedback regulation of ATP phosphoribosyltransferase activity by histidine. In Microcystis aeruginosa (strain NIES-843 / IAM M-2473), this protein is ATP phosphoribosyltransferase regulatory subunit.